Consider the following 323-residue polypeptide: Mortality factor 4-like protein 1 (323 aa).

In terms of domain architecture, Tudor-knot spans 12–62 (QEGERVLCFHGPLLYEAKCVKVAIKDKQVKYFIHHSGWNKNWDEWVPESRV). The interval 76–143 (LQKANQEQYA…RKKRARVDPT (68 aa)) is disordered. The segment at 94-227 (PGKKTSGLQQ…VAGIKEYFNV (134 aa)) is sufficient for interaction with SIN3A. Positions 96 to 107 (KKTSGLQQKNVD) match the Nuclear localization signal motif. Lys104 is modified (N6-acetyllysine). Residues 125 to 191 (STSETPQPPR…FYLPAKKNVD (67 aa)) are interaction with RB1-1. A sufficient for interaction with PHF12 region spans residues 149–303 (TFMNRVEVKV…FLKYLAKNSA (155 aa)). Residues 152-323 (NRVEVKVKIP…APPEYHRKAV (172 aa)) form the MRG domain. The segment at 284–305 (LALLLNYLHDFLKYLAKNSATL) is interaction with RB1-2.

In terms of assembly, component of the NuA4 histone acetyltransferase complex which contains the catalytic subunit KAT5/TIP60 and the subunits EP400, TRRAP/PAF400, BRD8/SMAP, EPC1, DMAP1/DNMAP1, RUVBL1/TIP49, RUVBL2, ING3, actin, ACTL6A/BAF53A, MORF4L1/MRG15, MORF4L2/MRGX, MRGBP, YEATS4/GAS41, VPS72/YL1 and MEAF6. The NuA4 complex interacts with MYC and the adenovirus E1A protein. MORF4L1 may also participate in the formation of NuA4 related complexes which lack the KAT5/TIP60 catalytic subunit, but which include the SWI/SNF related protein SRCAP. Component of the mSin3A histone deacetylase complex, which includes SIN3A, HDAC2, ARID4B, MORF4L1, RBBP4/RbAp48, and RBBP7/RbAp46. May also interact with PHF12 and one or more as yet undefined members of the TLE (transducin-like enhancer of split) family of transcriptional repressors. Component of the SIN3B complex, which includes SIN3B, HDAC2 or HDAC1, PHF12 and MORF4L1. Interacts with RB1 and KAT8. Interacts with the N-terminus of MRFAP1. Found in a complex composed of MORF4L1, MRFAP1 and RB1. Interacts with the entire BRCA complex, which contains BRCA1, PALB2, BRCA2 and RAD51. Interacts with PALB2. Forms a complex with MSL1 and NUPR1.

Its subcellular location is the nucleus. Functionally, component of the NuA4 histone acetyltransferase (HAT) complex which is involved in transcriptional activation of select genes principally by acetylation of nucleosomal histones H4 and H2A. This modification may both alter nucleosome - DNA interactions and promote interaction of the modified histones with other proteins which positively regulate transcription. This complex may be required for the activation of transcriptional programs associated with oncogene and proto-oncogene mediated growth induction, tumor suppressor mediated growth arrest and replicative senescence, apoptosis, and DNA repair. The NuA4 complex ATPase and helicase activities seem to be, at least in part, contributed by the association of RUVBL1 and RUVBL2 with EP400. NuA4 may also play a direct role in DNA repair when directly recruited to sites of DNA damage. As part of the SIN3B complex represses transcription and counteracts the histone acetyltransferase activity of EP300 through the recognition H3K27ac marks by PHF12 and the activity of the histone deacetylase HDAC2. SIN3B complex is recruited downstream of the constitutively active genes transcriptional start sites through interaction with histones and mitigates histone acetylation and RNA polymerase II progression within transcribed regions contributing to the regulation of transcription. Required for homologous recombination repair (HRR) and resistance to mitomycin C (MMC). Involved in the localization of PALB2, BRCA2 and RAD51, but not BRCA1, to DNA-damage foci. The polypeptide is Mortality factor 4-like protein 1 (MORF4L1) (Pongo abelii (Sumatran orangutan)).